The sequence spans 360 residues: Biotin synthase (360 aa).

The disordered stretch occupies residues 1–25 (MQHAPLNFVPDAAKVPPTPGQSPNA). The region spanning 58-285 (NAVQLSTLLS…KAMVRLSAGR (228 aa)) is the Radical SAM core domain. Residues Cys73, Cys77, and Cys80 each coordinate [4Fe-4S] cluster. Cys117, Cys148, Cys208, and Arg280 together coordinate [2Fe-2S] cluster. The tract at residues 340–360 (QAEGAQHSHSSHCHIDITPAD) is disordered.

Belongs to the radical SAM superfamily. Biotin synthase family. As to quaternary structure, homodimer. It depends on [4Fe-4S] cluster as a cofactor. [2Fe-2S] cluster is required as a cofactor.

The enzyme catalyses (4R,5S)-dethiobiotin + (sulfur carrier)-SH + 2 reduced [2Fe-2S]-[ferredoxin] + 2 S-adenosyl-L-methionine = (sulfur carrier)-H + biotin + 2 5'-deoxyadenosine + 2 L-methionine + 2 oxidized [2Fe-2S]-[ferredoxin]. It functions in the pathway cofactor biosynthesis; biotin biosynthesis; biotin from 7,8-diaminononanoate: step 2/2. Its function is as follows. Catalyzes the conversion of dethiobiotin (DTB) to biotin by the insertion of a sulfur atom into dethiobiotin via a radical-based mechanism. The protein is Biotin synthase of Ralstonia nicotianae (strain ATCC BAA-1114 / GMI1000) (Ralstonia solanacearum).